We begin with the raw amino-acid sequence, 192 residues long: Imidazoleglycerol-phosphate dehydratase (192 aa).

It belongs to the imidazoleglycerol-phosphate dehydratase family.

It localises to the cytoplasm. The enzyme catalyses D-erythro-1-(imidazol-4-yl)glycerol 3-phosphate = 3-(imidazol-4-yl)-2-oxopropyl phosphate + H2O. Its pathway is amino-acid biosynthesis; L-histidine biosynthesis; L-histidine from 5-phospho-alpha-D-ribose 1-diphosphate: step 6/9. In Staphylococcus aureus (strain JH9), this protein is Imidazoleglycerol-phosphate dehydratase.